The primary structure comprises 176 residues: Ribosome maturation factor RimM (176 aa).

In terms of domain architecture, PRC barrel spans 99–173; it reads KEGEFHLVDL…WLLIKPPPGL (75 aa).

This sequence belongs to the RimM family. As to quaternary structure, binds ribosomal protein uS19.

Its subcellular location is the cytoplasm. An accessory protein needed during the final step in the assembly of 30S ribosomal subunit, possibly for assembly of the head region. Essential for efficient processing of 16S rRNA. May be needed both before and after RbfA during the maturation of 16S rRNA. It has affinity for free ribosomal 30S subunits but not for 70S ribosomes. The protein is Ribosome maturation factor RimM of Prochlorococcus marinus (strain MIT 9211).